A 229-amino-acid polypeptide reads, in one-letter code: Large ribosomal subunit protein uL1 (229 aa).

This sequence belongs to the universal ribosomal protein uL1 family. Part of the 50S ribosomal subunit.

Functionally, binds directly to 23S rRNA. The L1 stalk is quite mobile in the ribosome, and is involved in E site tRNA release. Its function is as follows. Protein L1 is also a translational repressor protein, it controls the translation of the L11 operon by binding to its mRNA. This chain is Large ribosomal subunit protein uL1, found in Flavobacterium johnsoniae (strain ATCC 17061 / DSM 2064 / JCM 8514 / BCRC 14874 / CCUG 350202 / NBRC 14942 / NCIMB 11054 / UW101) (Cytophaga johnsonae).